The chain runs to 311 residues: GTP cyclohydrolase FolE2 (311 aa).

Belongs to the GTP cyclohydrolase IV family.

It catalyses the reaction GTP + H2O = 7,8-dihydroneopterin 3'-triphosphate + formate + H(+). It functions in the pathway cofactor biosynthesis; 7,8-dihydroneopterin triphosphate biosynthesis; 7,8-dihydroneopterin triphosphate from GTP: step 1/1. Functionally, converts GTP to 7,8-dihydroneopterin triphosphate. This Xanthomonas campestris pv. campestris (strain 8004) protein is GTP cyclohydrolase FolE2.